The chain runs to 162 residues: Sec-independent protein translocase protein TatB (162 aa).

A helical transmembrane segment spans residues 1–21 (MFDLGWTELLVIGVVALIVVG). Disordered regions lie at residues 69-111 (ATNP…DRAE) and 124-162 (AADRMAREAAEAAAKAEEAEAALSATPASTASSDSETKA). Composition is skewed to basic and acidic residues over residues 83 to 111 (ATRDLTDSIDPTKFDPESETGKLAADRAE) and 124 to 141 (AADRMAREAAEAAAKAEE). Positions 144 to 155 (AALSATPASTAS) are enriched in low complexity.

Belongs to the TatB family. In terms of assembly, the Tat system comprises two distinct complexes: a TatABC complex, containing multiple copies of TatA, TatB and TatC subunits, and a separate TatA complex, containing only TatA subunits. Substrates initially bind to the TatABC complex, which probably triggers association of the separate TatA complex to form the active translocon.

Its subcellular location is the cell inner membrane. Part of the twin-arginine translocation (Tat) system that transports large folded proteins containing a characteristic twin-arginine motif in their signal peptide across membranes. Together with TatC, TatB is part of a receptor directly interacting with Tat signal peptides. TatB may form an oligomeric binding site that transiently accommodates folded Tat precursor proteins before their translocation. This Ruegeria sp. (strain TM1040) (Silicibacter sp.) protein is Sec-independent protein translocase protein TatB.